The chain runs to 355 residues: Protein ATP1B4 (355 aa).

Residues 1 to 108 (MRRQLRSRRA…SLARTGQSWS (108 aa)) are Nuclear-facing. The tract at residues 33-77 (ADEEEEAEEEARVMVVPDLEEEEEEEEEKEEEEKEEEDSHSQETD) is disordered. Positions 50–68 (DLEEEEEEEEEKEEEEKEE) are enriched in acidic residues. A helical; Signal-anchor for type II membrane protein membrane pass occupies residues 109–129 (LILVIYFFFYASLAAVITLCM). Residues 130–355 (YTLFLTISPY…RVIFTLNIET (226 aa)) are Perinuclear space-facing.

This sequence belongs to the X(+)/potassium ATPases subunit beta family. As to quaternary structure, associates with a SMAD7-transcriptional complex. Interacts with SNW1 and TOR1AIP1. Does not associate with known Na,K-ATPase alpha-subunits.

It is found in the nucleus inner membrane. In terms of biological role, may act as a transcriptional coregulator during muscle development through its interaction with SNW1. Has lost its ancestral function as a Na,K-ATPase beta-subunit. This Bos taurus (Bovine) protein is Protein ATP1B4 (ATP1B4).